Consider the following 1454-residue polypeptide: ABC transporter G family member 39 (1454 aa).

The region spanning 175-448 (LGFFHLLPSK…FEYFGFQCPE (274 aa)) is the ABC transporter 1 domain. An ATP-binding site is contributed by 208-215 (GPPSSGKT). The 214-residue stretch at 526–739 (ELFKACFDRE…GQTAIVMNEF (214 aa)) folds into the ABC transmembrane type-2 1 domain. Transmembrane regions (helical) follow at residues 544–564 (FVYVFKTVQITIMSLITMTVY), 584–604 (MFFSLINVMFNGLAELAFTVM), 623–643 (FALPAWLLKIPLSLIESGIWI), 663–683 (LLAYFCVNQMALSLFRFLGAI), 689–709 (ISNSIGTFTLLIVFTLGGFII), 716–736 (PWMTWAYYMSPMMYGQTAIVM), and 775–795 (FWICIVALLGFSLLFNLFYIL). Residues 812–824 (EEGKDKQKGENRG) are compositionally biased toward basic and acidic residues. A disordered region spans residues 812 to 838 (EEGKDKQKGENRGTEGSVVELNSSSNK). Residues 853–1106 (LAFNNVNYYV…LVEYFEAVEG (254 aa)) enclose the ABC transporter 2 domain. ATP is bound at residue 898–905 (GVSGAGKT). The ABC transmembrane type-2 2 domain occupies 1178–1392 (TQTKACFWKQ…TLYGLITSQV (215 aa)). Transmembrane regions (helical) follow at residues 1199-1219 (AIRFLMTVVIGVLFGLIFWQI), 1231-1251 (NFFGAMYAAVLFLGALNAATV), 1285-1303 (IMYNTIQTGVYTLILYSMI), 1312-1332 (FLWFYYYMLTSFIYFTLYGMM), 1342-1362 (IAGICMSFFLSLWNLFSGFLI), 1367-1387 (IPIWWRWYYWATPVAWTLYGL), and 1423-1443 (FLPVVAVVHIAWILLFLFVFA).

Belongs to the ABC transporter superfamily. ABCG family. PDR (TC 3.A.1.205) subfamily.

Its subcellular location is the membrane. May be a general defense protein. The chain is ABC transporter G family member 39 (ABCG39) from Arabidopsis thaliana (Mouse-ear cress).